Reading from the N-terminus, the 196-residue chain is Nitrogen regulatory protein P-II homolog (196 aa).

Residues 1–61 (MAASMTKPIS…NNSRVLPVVS (61 aa)) constitute a chloroplast transit peptide. Residues 108-112 (GFGAQ) and 161-164 (GDGK) each bind ATP. Gly110 lines the Mg(2+) pocket.

The protein belongs to the P(II) protein family. Homodimer. Interacts with NAGK. Interaction with NAGK is dependent of MgATP and inhibited by 2-oxoglutarate, arginine, glutamate, citrate, and oxaloacetate.

Its subcellular location is the plastid. The protein resides in the chloroplast. Its function is as follows. Participates in sensing carbon and organic nitrogen status and regulates some steps of primary carbon and nitrogen metabolism. Required for nitrite uptake in chloroplasts and regulates arginine biosynthesis through interaction with acetylglutamate kinase (NAGK) in chloroplasts. Regulates fatty acids synthesis in chloroplasts by interacting with the acetyl-CoA carboxylase complex and inhibiting acetyl-CoA carboxylase (ACCase) activity. This Arabidopsis thaliana (Mouse-ear cress) protein is Nitrogen regulatory protein P-II homolog (GLB1).